A 1232-amino-acid chain; its full sequence is Anion exchange protein 3 (1232 aa).

Residues 1–11 are compositionally biased toward pro residues; that stretch reads MANGVIPPPGG. Disordered regions lie at residues 1–316 and 429–498; these read MANG…KLDR and NDDK…GDGH. Topologically, residues 1–708 are cytoplasmic; that stretch reads MANGVIPPPG…DLRDALHSQC (708 aa). A compositionally biased stretch (basic and acidic residues) spans 58–75; sequence DPEKPSRSYSERDFEFHR. Basic residues-rich tracts occupy residues 76–97 and 104–113; these read HTSH…KLRR and RHTRRKRKKE. A compositionally biased stretch (acidic residues) spans 134 to 152; the sequence is VEEEEEEEEEEEGESEAEP. Phosphoserine occurs at positions 167, 170, 175, and 198. The segment covering 200-214 has biased composition (low complexity); it reads QHSSSSPSPRAQASR. The span at 267–279 shows a compositional bias: basic and acidic residues; it reads DDMKSHRLEDNPG. Over residues 280–289 the composition is skewed to basic residues; sequence VRRHLVKKPS. Arg295 bears the Omega-N-methylarginine mark. Residues 305 to 316 show a composition bias toward basic residues; it reads LRRKKKKKKLDR. The span at 440–450 shows a compositional bias: polar residues; it reads NPSSSSMNSVL. Residues 481 to 498 are compositionally biased toward basic and acidic residues; that stretch reads HDPDAKEKPLHMPGGDGH. Transmembrane regions (helical) follow at residues 709 to 731, 737 to 774, 794 to 816, 826 to 847, and 893 to 910; these read VAAV…GLLG, LMGV…LLVF, VWVG…SFLV, IFAF…YKVF, and ALLS…AFFL. A membrane (anion exchange) region spans residues 709–1232; the sequence is VAAVLFIYFA…DEYNELHMPV (524 aa). Over 911-925 the chain is Cytoplasmic; that stretch reads RKFRNSRFLGGKARR. 5 helical membrane passes run 926–946, 980–1002, 1028–1049, 1083–1128, and 1155–1191; these read IIGD…DYSI, PFPP…LIFM, LLLI…LTAA, VTGV…IQLS, and MHLF…TVPL. The S-palmitoyl cysteine moiety is linked to residue Cys1165.

It belongs to the anion exchanger (TC 2.A.31) family.

Its subcellular location is the cell membrane. The enzyme catalyses hydrogencarbonate(in) + chloride(out) = hydrogencarbonate(out) + chloride(in). Its function is as follows. Sodium-independent anion exchanger which mediates the electroneutral exchange of chloride for bicarbonate ions across the cell membrane. May be involved in the regulation of intracellular pH, and the modulation of cardiac action potential. The protein is Anion exchange protein 3 (SLC4A3) of Pongo abelii (Sumatran orangutan).